Reading from the N-terminus, the 529-residue chain is Basal body-orientation factor 1 (529 aa).

Over residues 1 to 13 (MPSKGKDKKKGKS) the composition is skewed to basic residues. Residues 1–22 (MPSKGKDKKKGKSRGKDTKKLI) are disordered. 2 coiled-coil regions span residues 55-198 (DTSR…LKQE) and 271-361 (IKEK…EVER). Residues 510 to 529 (GKVVLPTIPKGPQESDTGTF) are disordered.

It belongs to the BBOF1 family. In terms of assembly, interacts with MNS1 and ODF2.

It localises to the cytoplasm. It is found in the cytoskeleton. The protein resides in the cilium basal body. The protein localises to the flagellum axoneme. In terms of biological role, plays an essential role in sperm motility and male fertility by stabilizing the sperm flagellar axonemal structure. May be required for the stability of ODF2 and MANS1 proteins. Dispensable for the assembly and function of motile cilia. The polypeptide is Basal body-orientation factor 1 (Macaca fascicularis (Crab-eating macaque)).